Reading from the N-terminus, the 188-residue chain is dCTP deaminase (188 aa).

Residues 111 to 116, 135 to 137, Gln156, Tyr170, and Gln180 contribute to the dCTP site; these read KSTYAR and TLE. Glu137 serves as the catalytic Proton donor/acceptor.

Belongs to the dCTP deaminase family. As to quaternary structure, homotrimer.

It catalyses the reaction dCTP + H2O + H(+) = dUTP + NH4(+). It functions in the pathway pyrimidine metabolism; dUMP biosynthesis; dUMP from dCTP (dUTP route): step 1/2. In terms of biological role, catalyzes the deamination of dCTP to dUTP. This is dCTP deaminase from Polaromonas sp. (strain JS666 / ATCC BAA-500).